Here is a 159-residue protein sequence, read N- to C-terminus: L-alanine exporter AlaE (159 aa).

The next 4 membrane-spanning stretches (helical) occupy residues 17–37, 48–68, 86–106, and 110–130; these read FAMVIFSFITGMMIEVFVSGM, LSIPVNIAIAWPYGVFRDYLL, MVAYVLFQSPVYACILLAVGA, and QIITAVTSNAFVSGALGIVYG.

This sequence belongs to the AlaE exporter family.

It is found in the cell inner membrane. In terms of biological role, exports L-alanine. The sequence is that of L-alanine exporter AlaE from Photobacterium profundum (strain SS9).